A 313-amino-acid polypeptide reads, in one-letter code: Olfactory receptor 1M1 (313 aa).

Residues 1–25 (MEPRNQTSASQFILLGLSEKPEQET) are Extracellular-facing. An N-linked (GlcNAc...) asparagine glycan is attached at Asn-5. The helical transmembrane segment at 26–49 (LLFSLFFCMYLVMVVGNLLIILAI) threads the bilayer. Over 50–57 (SIDSHLHT) the chain is Cytoplasmic. Residues 58-79 (PMYFFLANLSLVDFCLATNTIP) traverse the membrane as a helical segment. Over 80-100 (KMLVSLQTGSKAISYPCCLIQ) the chain is Extracellular. Cys-97 and Cys-189 form a disulfide bridge. Residues 101–120 (MYFFHFFGIVDSVIIAMMAY) form a helical membrane-spanning segment. The Cytoplasmic segment spans residues 121–139 (DRFVAICHPLHYAKIMSLR). A helical transmembrane segment spans residues 140–158 (LCRLLVGALWAFSCFISLT). At 159–196 (HILLMARLVFCGSHEVPHYFCDLTPILRLSCTDTSVNR) the chain is on the extracellular side. Residues 197-219 (IFILIVAGMVIATPFVCILASYA) form a helical membrane-spanning segment. At 220-236 (RILVAIMKVPSAGGRKK) the chain is on the cytoplasmic side. The helical transmembrane segment at 237–259 (AFSTCSSHLSVVALFYGTTIGVY) threads the bilayer. At 260–272 (LCPSSVLTTVKEK) the chain is on the extracellular side. Residues 273 to 292 (ASAVMYTAVTPMLNPFIYSL) form a helical membrane-spanning segment. Residues 293-313 (RNRDLKGALRKLVNRKITSSS) are Cytoplasmic-facing.

Belongs to the G-protein coupled receptor 1 family.

The protein localises to the cell membrane. Functionally, odorant receptor. The chain is Olfactory receptor 1M1 from Homo sapiens (Human).